The primary structure comprises 1208 residues: Spindle pole body protein pcp1 (1208 aa).

Over residues 1-17 (MSERDFNTQSPKFKDEN) the composition is skewed to basic and acidic residues. The disordered stretch occupies residues 1 to 91 (MSERDFNTQS…DKYNGSLGDK (91 aa)). Residues 48–64 (NDKSSFQTPLRNGSYQP) are compositionally biased toward polar residues. Coiled-coil stretches lie at residues 151–375 (LREQ…KENQ), 387–803 (TDSM…ANIE), 874–1091 (GTET…QSTQ), and 1177–1204 (ERMK…AKAK). Ser906 carries the post-translational modification Phosphoserine.

In terms of assembly, interacts with ccq1.

The protein resides in the nucleus. It is found in the cytoplasm. It localises to the cytoskeleton. Its subcellular location is the microtubule organizing center. The protein localises to the spindle pole body. Its function is as follows. Spindle pole body component that binds calmodulin. Overexpression of pcp1 causes the formation of supernumerary SPB-like structures and disrupts both mitotic spindle assembly and chromosome segregation. This is Spindle pole body protein pcp1 (pcp1) from Schizosaccharomyces pombe (strain 972 / ATCC 24843) (Fission yeast).